Reading from the N-terminus, the 299-residue chain is 4-diphosphocytidyl-2-C-methyl-D-erythritol kinase (299 aa).

Lys17 is an active-site residue. Position 103–113 (103–113 (PVASGIGGGSG)) interacts with ATP. Asp145 is an active-site residue.

Belongs to the GHMP kinase family. IspE subfamily.

It catalyses the reaction 4-CDP-2-C-methyl-D-erythritol + ATP = 4-CDP-2-C-methyl-D-erythritol 2-phosphate + ADP + H(+). It participates in isoprenoid biosynthesis; isopentenyl diphosphate biosynthesis via DXP pathway; isopentenyl diphosphate from 1-deoxy-D-xylulose 5-phosphate: step 3/6. Its function is as follows. Catalyzes the phosphorylation of the position 2 hydroxy group of 4-diphosphocytidyl-2C-methyl-D-erythritol. In Bartonella tribocorum (strain CIP 105476 / IBS 506), this protein is 4-diphosphocytidyl-2-C-methyl-D-erythritol kinase.